The chain runs to 145 residues: 3-hydroxyacyl-[acyl-carrier-protein] dehydratase FabZ (145 aa).

Residue histidine 47 is part of the active site.

The protein belongs to the thioester dehydratase family. FabZ subfamily.

It is found in the cytoplasm. The enzyme catalyses a (3R)-hydroxyacyl-[ACP] = a (2E)-enoyl-[ACP] + H2O. Functionally, involved in unsaturated fatty acids biosynthesis. Catalyzes the dehydration of short chain beta-hydroxyacyl-ACPs and long chain saturated and unsaturated beta-hydroxyacyl-ACPs. This Aromatoleum aromaticum (strain DSM 19018 / LMG 30748 / EbN1) (Azoarcus sp. (strain EbN1)) protein is 3-hydroxyacyl-[acyl-carrier-protein] dehydratase FabZ.